The chain runs to 338 residues: E3 ubiquitin-protein ligase RING1 (338 aa).

The tract at residues 102–124 (TTTSSSASIDPNNPSLSGPTRSG) is disordered. Residues 110–121 (IDPNNPSLSGPT) are compositionally biased toward polar residues. Residues 224 to 265 (CAVCMDDFEEGTEAKQMPCKHLYHKDCLLPWLELHNSCPVCR) form an RING-type; atypical zinc finger. Composition is skewed to basic and acidic residues over residues 267–279 (ELPT…ERRV) and 298–309 (SDGDNRTVERSF). Residues 267–338 (ELPTDDPDYE…NAETRQEDLD (72 aa)) are disordered.

Post-translationally, auto-ubiquitinated as part of the enzymatic reaction. As to expression, mostly expressed in cotton fibers, and, to a lower extent, in leaves and flowers.

It carries out the reaction S-ubiquitinyl-[E2 ubiquitin-conjugating enzyme]-L-cysteine + [acceptor protein]-L-lysine = [E2 ubiquitin-conjugating enzyme]-L-cysteine + N(6)-ubiquitinyl-[acceptor protein]-L-lysine.. It participates in protein modification; protein ubiquitination. In terms of biological role, E3 ubiquitin-protein ligase which accepts ubiquitin from an E2 ubiquitin-conjugating enzyme in the form of a thioester and then directly transfers the ubiquitin to targeted substrates. Promotes polyubiquitination of target proteins. This Gossypium hirsutum (Upland cotton) protein is E3 ubiquitin-protein ligase RING1 (RING1).